The sequence spans 474 residues: tRNA-2-methylthio-N(6)-dimethylallyladenosine synthase (474 aa).

The region spanning 3–120 (QKLHIKTWGC…LPEMINQIRG (118 aa)) is the MTTase N-terminal domain. 6 residues coordinate [4Fe-4S] cluster: cysteine 12, cysteine 49, cysteine 83, cysteine 157, cysteine 161, and cysteine 164. Positions 143–375 (RAEGPTAFVS…QQRINNQAAQ (233 aa)) constitute a Radical SAM core domain. In terms of domain architecture, TRAM spans 378 to 441 (RAMLGTEQRV…TNSLRGEVVR (64 aa)).

It belongs to the methylthiotransferase family. MiaB subfamily. In terms of assembly, monomer. The cofactor is [4Fe-4S] cluster.

The protein resides in the cytoplasm. It carries out the reaction N(6)-dimethylallyladenosine(37) in tRNA + (sulfur carrier)-SH + AH2 + 2 S-adenosyl-L-methionine = 2-methylsulfanyl-N(6)-dimethylallyladenosine(37) in tRNA + (sulfur carrier)-H + 5'-deoxyadenosine + L-methionine + A + S-adenosyl-L-homocysteine + 2 H(+). Its function is as follows. Catalyzes the methylthiolation of N6-(dimethylallyl)adenosine (i(6)A), leading to the formation of 2-methylthio-N6-(dimethylallyl)adenosine (ms(2)i(6)A) at position 37 in tRNAs that read codons beginning with uridine. The chain is tRNA-2-methylthio-N(6)-dimethylallyladenosine synthase from Histophilus somni (strain 129Pt) (Haemophilus somnus).